The primary structure comprises 107 residues: Colipase (107 aa).

Residues 1–17 (MEKVLVLLLVALSVAYA) form the signal peptide. A propeptide spans 18–22 (APGPR) (enterostatin, activation peptide). 5 cysteine pairs are disulfide-bonded: C34-C45, C40-C56, C44-C78, C66-C86, and C80-C104.

Belongs to the colipase family. In terms of assembly, forms a 1:1 stoichiometric complex with pancreatic lipase. Expressed by the pancreas.

The protein localises to the secreted. In terms of biological role, colipase is a cofactor of pancreatic lipase. It allows the lipase to anchor itself to the lipid-water interface. Without colipase the enzyme is washed off by bile salts, which have an inhibitory effect on the lipase. Functionally, enterostatin has a biological activity as a satiety signal. The polypeptide is Colipase (CLPS) (Oryctolagus cuniculus (Rabbit)).